The following is a 144-amino-acid chain: Large ribosomal subunit protein uL13 (144 aa).

Belongs to the universal ribosomal protein uL13 family. Part of the 50S ribosomal subunit.

In terms of biological role, this protein is one of the early assembly proteins of the 50S ribosomal subunit, although it is not seen to bind rRNA by itself. It is important during the early stages of 50S assembly. This Mycoplasma mobile (strain ATCC 43663 / 163K / NCTC 11711) (Mesomycoplasma mobile) protein is Large ribosomal subunit protein uL13.